The following is a 37-amino-acid chain: Bactericidin B-2 (37 aa).

G37 is modified (glycine amide).

The protein belongs to the cecropin family.

Its subcellular location is the secreted. Cecropins have lytic and antibacterial activity against several Gram-positive and Gram-negative bacteria. This chain is Bactericidin B-2, found in Manduca sexta (Tobacco hawkmoth).